We begin with the raw amino-acid sequence, 613 residues long: Glutaminase 1 (613 aa).

A glutaminase region spans residues 33–315; it reads GAVADYIPEL…LSSHYDLHML (283 aa). Substrate-binding residues include Ser75, Asn124, Glu168, Asn175, Tyr199, Tyr251, and Val269. The region spanning 345–457 is the STAS domain; sequence REILAAHEQE…LDTAIEWAED (113 aa). 480–595 is an a nucleoside 3',5'-cyclic phosphate binding site; the sequence is LLEGLSADEL…ERIMRNLAQL (116 aa).

Belongs to the glutaminase family. As to quaternary structure, homotetramer.

It carries out the reaction L-glutamine + H2O = L-glutamate + NH4(+). The protein is Glutaminase 1 (glsA1) of Bradyrhizobium diazoefficiens (strain JCM 10833 / BCRC 13528 / IAM 13628 / NBRC 14792 / USDA 110).